We begin with the raw amino-acid sequence, 123 residues long: Transmembrane protein 80 (123 aa).

Transmembrane regions (helical) follow at residues 2–22, 35–55, 68–88, and 102–122; these read LFHL…LMIV, LALD…QLYL, LAAS…FLLW, and VLLV…ADFI.

The protein localises to the membrane. Its subcellular location is the cell projection. It is found in the cilium. The sequence is that of Transmembrane protein 80 (Tmem80) from Mus musculus (Mouse).